Consider the following 279-residue polypeptide: Large ribosomal subunit protein uL5c (279 aa).

Disordered stretches follow at residues 1–23 (MAAT…TASS) and 40–63 (LRVA…SPSG). A chloroplast-targeting transit peptide spans 1 to 43 (MAATAVTLPSSPAPFPVTTTASSSRNVRLLLRSPPPRRALRVA). Positions 41–50 (RVAASAAADA) are enriched in low complexity. A compositionally biased stretch (pro residues) spans 51 to 60 (PPKPAPPPTS).

Belongs to the universal ribosomal protein uL5 family. In terms of assembly, part of the 50S ribosomal subunit; contacts the 5S rRNA.

Its subcellular location is the plastid. It localises to the chloroplast. Its function is as follows. Binds 5S rRNA, forms part of the central protuberance of the 50S subunit. The polypeptide is Large ribosomal subunit protein uL5c (RPL5) (Oryza sativa subsp. japonica (Rice)).